We begin with the raw amino-acid sequence, 262 residues long: Phosphonates import ATP-binding protein PhnC (262 aa).

One can recognise an ABC transporter domain in the interval 5–253 (ICVEQLSKTF…RFDHLYRSIN (249 aa)). 37–44 (GPSGSGKS) serves as a coordination point for ATP.

Belongs to the ABC transporter superfamily. Phosphonates importer (TC 3.A.1.9.1) family. The complex is composed of two ATP-binding proteins (PhnC), two transmembrane proteins (PhnE) and a solute-binding protein (PhnD).

It is found in the cell inner membrane. The enzyme catalyses phosphonate(out) + ATP + H2O = phosphonate(in) + ADP + phosphate + H(+). Part of the ABC transporter complex PhnCDE involved in phosphonates import. Responsible for energy coupling to the transport system. In Escherichia coli O157:H7, this protein is Phosphonates import ATP-binding protein PhnC.